A 354-amino-acid chain; its full sequence is UDP-N-acetylglucosamine--N-acetylmuramyl-(pentapeptide) pyrophosphoryl-undecaprenol N-acetylglucosamine transferase (354 aa).

Residues 13 to 15 (SGG), Asn-125, Ser-189, Ile-242, 261 to 266 (ALTVSE), and Gln-286 each bind UDP-N-acetyl-alpha-D-glucosamine.

It belongs to the glycosyltransferase 28 family. MurG subfamily.

Its subcellular location is the cell inner membrane. The enzyme catalyses di-trans,octa-cis-undecaprenyl diphospho-N-acetyl-alpha-D-muramoyl-L-alanyl-D-glutamyl-meso-2,6-diaminopimeloyl-D-alanyl-D-alanine + UDP-N-acetyl-alpha-D-glucosamine = di-trans,octa-cis-undecaprenyl diphospho-[N-acetyl-alpha-D-glucosaminyl-(1-&gt;4)]-N-acetyl-alpha-D-muramoyl-L-alanyl-D-glutamyl-meso-2,6-diaminopimeloyl-D-alanyl-D-alanine + UDP + H(+). The protein operates within cell wall biogenesis; peptidoglycan biosynthesis. Functionally, cell wall formation. Catalyzes the transfer of a GlcNAc subunit on undecaprenyl-pyrophosphoryl-MurNAc-pentapeptide (lipid intermediate I) to form undecaprenyl-pyrophosphoryl-MurNAc-(pentapeptide)GlcNAc (lipid intermediate II). This chain is UDP-N-acetylglucosamine--N-acetylmuramyl-(pentapeptide) pyrophosphoryl-undecaprenol N-acetylglucosamine transferase, found in Buchnera aphidicola subsp. Acyrthosiphon pisum (strain APS) (Acyrthosiphon pisum symbiotic bacterium).